The following is a 60-amino-acid chain: DNA-directed RNA polymerase subunit Rpo6 (60 aa).

It belongs to the archaeal Rpo6/eukaryotic RPB6 RNA polymerase subunit family. As to quaternary structure, part of the RNA polymerase complex.

Its subcellular location is the cytoplasm. The catalysed reaction is RNA(n) + a ribonucleoside 5'-triphosphate = RNA(n+1) + diphosphate. Functionally, DNA-dependent RNA polymerase (RNAP) catalyzes the transcription of DNA into RNA using the four ribonucleoside triphosphates as substrates. This is DNA-directed RNA polymerase subunit Rpo6 from Methanothrix thermoacetophila (strain DSM 6194 / JCM 14653 / NBRC 101360 / PT) (Methanosaeta thermophila).